A 208-amino-acid chain; its full sequence is MTNKDESVEKNTESTVEETNIKQNIDDSVEQAEESKGHLQDEAIEETSDENVIEEIDPKDQKINELQQLADENEEKYLRLYAEFENYKRRIQKENEINKTYQAQRVLTDILPAIDNIERALQIEGDDETFKSLQKGVQMVHESLINALKDNGLEVIKTEGEAFDPNIHQAVVQDDNPDFESGEITQELQKGYKLKDRVLRPSMVKVNQ.

Residues Met-1–Thr-12 show a composition bias toward basic and acidic residues. The disordered stretch occupies residues Met-1 to Lys-59. The span at Glu-13–Gln-23 shows a compositional bias: polar residues. A compositionally biased stretch (acidic residues) spans Glu-42–Glu-55.

It belongs to the GrpE family. In terms of assembly, homodimer.

It is found in the cytoplasm. Its function is as follows. Participates actively in the response to hyperosmotic and heat shock by preventing the aggregation of stress-denatured proteins, in association with DnaK and GrpE. It is the nucleotide exchange factor for DnaK and may function as a thermosensor. Unfolded proteins bind initially to DnaJ; upon interaction with the DnaJ-bound protein, DnaK hydrolyzes its bound ATP, resulting in the formation of a stable complex. GrpE releases ADP from DnaK; ATP binding to DnaK triggers the release of the substrate protein, thus completing the reaction cycle. Several rounds of ATP-dependent interactions between DnaJ, DnaK and GrpE are required for fully efficient folding. This chain is Protein GrpE, found in Staphylococcus aureus (strain Mu3 / ATCC 700698).